The primary structure comprises 496 residues: MGRRALLLLLLSFLAPWTTIALRPALRALGSLHLPTNPTSLPAVAKNYSVLYFQQKVDHFGFNTVKTFNQRYLVADKYWKKNGGSILFYTGNEGDIIWFCNNTGFMWDVAEELKAMLVFAEHRYYGESLPFGDNTFKDSRHLNFLTSEQALADFAELIKHLKRTIPGAENQPVIAIGGSYGGMLAAWFRMKYPHMVVGALAASAPIWQFEDLVPCGVFMKIVTTDFRKSGPHCSESIRRSWDAINRLSNTGSGLQWLTGALHLCSPLTSQDIQHLKDWISETWVNLAMVDYPYASNFLQPLPAWPIKVVCQYLKNPNVSDSLLLQNIFQALNVYYNYSGQVKCLNISETATSSLGTLGWSYQACTEVVMPFCTNGVDDMFEPHSWNLKELSDDCFQQWGVRPRPSWITTMYGGKNISSHTNIVFSNGELDPWSGGGVTKDITDTLVAVTISEGAHHLDLRTKNALDPTSVLLARSLEVRHMKNWIRDFYDSAGKQH.

The signal sequence occupies residues 1 to 21 (MGRRALLLLLLSFLAPWTTIA). A propeptide spanning residues 22 to 45 (LRPALRALGSLHLPTNPTSLPAVA) is cleaved from the precursor. N-linked (GlcNAc...) asparagine glycans are attached at residues asparagine 47 and asparagine 101. Residue serine 179 is the Charge relay system of the active site. An SKS domain region spans residues 194-334 (HMVVGALAAS…QNIFQALNVY (141 aa)). 4 disulfide bridges follow: cysteine 215–cysteine 372, cysteine 233–cysteine 310, cysteine 264–cysteine 343, and cysteine 364–cysteine 394. 3 N-linked (GlcNAc...) asparagine glycosylation sites follow: asparagine 317, asparagine 336, and asparagine 345. Residue asparagine 415 is glycosylated (N-linked (GlcNAc...) asparagine). Residues aspartate 430 and histidine 455 each act as charge relay system in the active site.

This sequence belongs to the peptidase S28 family. As to quaternary structure, homodimer.

The protein resides in the lysosome. It carries out the reaction Cleavage of a -Pro-|-Xaa bond to release a C-terminal amino acid.. Its function is as follows. Cleaves C-terminal amino acids linked to proline in peptides such as angiotensin II, III and des-Arg9-bradykinin. This cleavage occurs at acidic pH, but enzymatic activity is retained with some substrates at neutral pH. The chain is Lysosomal Pro-X carboxypeptidase (PRCP) from Pongo abelii (Sumatran orangutan).